Here is a 246-residue protein sequence, read N- to C-terminus: MSGHSKWHNIQAKKGKADAKRGKIFTKIGKEIVVAVKQGGPSADSNPRLRDVIAKAKANNMPNDTIERSIKKASGELNAVDYETITYEGYGPAGIAVLVDVLTDNKNRSAGNVRYAFTKQGGNMGSTGCVSFMFQSKGQIVIEKKDGLDEDELMMMALDAGAEDFESEDEVYVVATSQEDFGTVREALEAEGLEFLEAEIKMVPDTYTAIDEDTATKFQKMLDVLEDDDDVQNVYHNAEFPEGWEE.

This sequence belongs to the TACO1 family.

Its subcellular location is the cytoplasm. The chain is Probable transcriptional regulatory protein CLD_1467 from Clostridium botulinum (strain Okra / Type B1).